A 347-amino-acid chain; its full sequence is NADH-quinone oxidoreductase subunit H (347 aa).

8 consecutive transmembrane segments (helical) span residues 13–33 (LLIL…VAYI), 82–102 (GVFL…WAVI), 115–135 (VGIL…IMGG), 161–181 (IGFV…SDIV), 198–218 (FLDW…ISAL), 248–268 (FLLF…LATI), 283–303 (FTWV…FFGI), and 321–341 (LGWK…AAFL).

The protein belongs to the complex I subunit 1 family. In terms of assembly, NDH-1 is composed of 14 different subunits. Subunits NuoA, H, J, K, L, M, N constitute the membrane sector of the complex.

The protein resides in the cell inner membrane. It catalyses the reaction a quinone + NADH + 5 H(+)(in) = a quinol + NAD(+) + 4 H(+)(out). NDH-1 shuttles electrons from NADH, via FMN and iron-sulfur (Fe-S) centers, to quinones in the respiratory chain. The immediate electron acceptor for the enzyme in this species is believed to be ubiquinone. Couples the redox reaction to proton translocation (for every two electrons transferred, four hydrogen ions are translocated across the cytoplasmic membrane), and thus conserves the redox energy in a proton gradient. This subunit may bind ubiquinone. This chain is NADH-quinone oxidoreductase subunit H, found in Mesorhizobium japonicum (strain LMG 29417 / CECT 9101 / MAFF 303099) (Mesorhizobium loti (strain MAFF 303099)).